The sequence spans 985 residues: Disease resistance protein At4g27190 (985 aa).

Residues 24-88 are a coiled coil; it reads ANAIKFKSNV…ISKARLKLEE (65 aa). The region spanning 167–429 is the NB-ARC domain; sequence IGVWGMGGVG…MAEGFMEELG (263 aa). Position 171–178 (171–178) interacts with ATP; sequence GMGGVGKT. LRR repeat units follow at residues 502–523, 526–547, 551–572, 575–597, 598–620, and 621–643; these read SLRR…VEEF, KTSV…GFLQ, TLRI…SLLR, SLHS…ETLA, KLEL…EELK, and RFRH…VVSR.

It belongs to the disease resistance NB-LRR family.

Its function is as follows. Disease resistance protein. The polypeptide is Disease resistance protein At4g27190 (Arabidopsis thaliana (Mouse-ear cress)).